The primary structure comprises 197 residues: Imidazoleglycerol-phosphate dehydratase (197 aa).

The protein belongs to the imidazoleglycerol-phosphate dehydratase family.

The protein resides in the cytoplasm. The catalysed reaction is D-erythro-1-(imidazol-4-yl)glycerol 3-phosphate = 3-(imidazol-4-yl)-2-oxopropyl phosphate + H2O. It participates in amino-acid biosynthesis; L-histidine biosynthesis; L-histidine from 5-phospho-alpha-D-ribose 1-diphosphate: step 6/9. This Clostridium acetobutylicum (strain ATCC 824 / DSM 792 / JCM 1419 / IAM 19013 / LMG 5710 / NBRC 13948 / NRRL B-527 / VKM B-1787 / 2291 / W) protein is Imidazoleglycerol-phosphate dehydratase.